A 195-amino-acid chain; its full sequence is Glycerol-3-phosphate acyltransferase (195 aa).

A run of 5 helical transmembrane segments spans residues 3-23, 51-71, 79-99, 111-131, and 153-173; these read EAAL…YFFT, GVAL…AWIG, LLVI…FLGF, IILF…LAIV, and LAMG…ALVV.

Belongs to the PlsY family. As to quaternary structure, probably interacts with PlsX.

It is found in the cell membrane. It carries out the reaction an acyl phosphate + sn-glycerol 3-phosphate = a 1-acyl-sn-glycero-3-phosphate + phosphate. Its pathway is lipid metabolism; phospholipid metabolism. Functionally, catalyzes the transfer of an acyl group from acyl-phosphate (acyl-PO(4)) to glycerol-3-phosphate (G3P) to form lysophosphatidic acid (LPA). This enzyme utilizes acyl-phosphate as fatty acyl donor, but not acyl-CoA or acyl-ACP. This chain is Glycerol-3-phosphate acyltransferase, found in Syntrophomonas wolfei subsp. wolfei (strain DSM 2245B / Goettingen).